A 1071-amino-acid polypeptide reads, in one-letter code: SLIT-ROBO Rho GTPase-activating protein 2 (1071 aa).

Positions 22–325 constitute an F-BAR domain; that stretch reads KEIRAQLTEQ…AVENLDATSD (304 aa). Over residues 181–203 the composition is skewed to basic and acidic residues; the sequence is LKEAEKQEEKQIGKSVKQEDRQT. Residues 181 to 211 are disordered; that stretch reads LKEAEKQEEKQIGKSVKQEDRQTPRSPDSTA. At Ser206 the chain carries Phosphoserine. Residues 363-401 adopt a coiled-coil conformation; sequence QSELVQRCQQLQSRLSTLKIENEEVKKTMEATLQTIQDI. Phosphoserine is present on residues Ser427, Ser500, Ser691, and Ser695. Residues 489–679 form the Rho-GAP domain; the sequence is ARRSSTVRKQ…TIIIQHENIF (191 aa). The interval 700-726 is disordered; it reads CDSTHGETTSAEDSTQDVTAEHHTSDD. The span at 705–717 shows a compositional bias: polar residues; sequence GETTSAEDSTQDV. Ser724 carries the post-translational modification Phosphoserine. An SH3 domain is found at 728 to 787; sequence CEPIEAIAKFDYVGRTARELSFKKGASLLLYQRASDDWWEGRHNGIDGLIPHQYIVVQDT. Phosphoserine is present on Ser795. 2 disordered regions span residues 795–819 and 838–918; these read SSPK…TGAS and RKRP…DSPQ. Positions 855–868 are enriched in low complexity; it reads HGLGSSLTDSSSLG. Composition is skewed to polar residues over residues 874–885 and 897–907; these read RPSSQPIMSQNL and GHGSLNSISRH. Phosphoserine is present on Ser916. Symmetric dimethylarginine; by PRMT5 is present on Arg927. At Ser930 the chain carries Phosphoserine. Residues 940–968 adopt a coiled-coil conformation; the sequence is EVIAQDIEATMNSALNELQELERQSSAKH. The tract at residues 984-1012 is disordered; it reads PVVAPTSEPSSPLHTQLLKDPEPAFQRSA. Ser990, Ser994, Ser1013, and Ser1027 each carry phosphoserine. The disordered stretch occupies residues 1029-1071; the sequence is KMAAPVKPPATRPKPTVFPKTNATSPGVNSSASPQATDKSCTV. The segment covering 1047 to 1071 has biased composition (polar residues); it reads PKTNATSPGVNSSASPQATDKSCTV.

As to quaternary structure, homodimer. Forms a heterooligomer with SRGAP1 and SRGAP3 through its F-BAR domain. Interacts (via SH3 domain) with GPHN. Interacts (via SH3 domain) with FMNL1 (activated by RAC1); regulates the actin filament severing activity of FMNL1 and actin dynamics. Interacts (via SH3 domain) with FMNL3. Interacts with RAC1; specifically stimulates RAC1 GTPase activity. Interacts (via F-BAR domain) with HOMER1. Interacts with ROBO1 and ROBO2. Interacts with FASLG. Interacts with PRMT5. Post-translationally, methylation at Arg-927 is required for the stimulation of cell migration, dimerization and localization at the plasma membrane protrusions.

Its subcellular location is the cell membrane. It is found in the cell projection. The protein resides in the dendritic spine. It localises to the postsynaptic density. The protein localises to the postsynaptic cell membrane. Its subcellular location is the lamellipodium. It is found in the cytoplasmic vesicle. The protein resides in the phagosome. It localises to the nucleus. The protein localises to the cytoplasm. Its subcellular location is the cytosol. Its function is as follows. Postsynaptic RAC1 GTPase activating protein (GAP) that plays a key role in neuronal morphogenesis and migration mainly during development of the cerebral cortex. Regulates excitatory and inhibitory synapse maturation and density in cortical pyramidal neurons. SRGAP2/SRGAP2A limits excitatory and inhibitory synapse density through its RAC1-specific GTPase activating activity, while it promotes maturation of both excitatory and inhibitory synapses through its ability to bind to the postsynaptic scaffolding protein HOMER1 at excitatory synapses, and the postsynaptic protein GPHN at inhibitory synapses. Mechanistically, acts by binding and deforming membranes, thereby regulating actin dynamics to regulate cell migration and differentiation. Promotes cell repulsion and contact inhibition of locomotion: localizes to protrusions with curved edges and controls the duration of RAC1 activity in contact protrusions. In non-neuronal cells, may also play a role in cell migration by regulating the formation of lamellipodia and filopodia. This is SLIT-ROBO Rho GTPase-activating protein 2 from Mus musculus (Mouse).